Reading from the N-terminus, the 176-residue chain is Inner membrane-spanning protein YciB (176 aa).

The next 6 membrane-spanning stretches (helical) occupy residues 3-23 (FLFDLFPIILFFAAFKVWGIF), 24-44 (TATAVAIVATLAQVAWVAFRH), 49-69 (TMLWVSLGVIVVFGGATLVLH), 81-101 (LYWLFAIGLLAARYAFGNNLI), 121-141 (VAWALFFAVLGVANLYVVHNF), and 149-169 (FKLFGTTGAMVVFIILQSLWL).

It belongs to the YciB family.

The protein localises to the cell inner membrane. In terms of biological role, plays a role in cell envelope biogenesis, maintenance of cell envelope integrity and membrane homeostasis. This chain is Inner membrane-spanning protein YciB, found in Burkholderia lata (strain ATCC 17760 / DSM 23089 / LMG 22485 / NCIMB 9086 / R18194 / 383).